The chain runs to 153 residues: SsrA-binding protein (153 aa).

The protein belongs to the SmpB family.

The protein localises to the cytoplasm. Its function is as follows. Required for rescue of stalled ribosomes mediated by trans-translation. Binds to transfer-messenger RNA (tmRNA), required for stable association of tmRNA with ribosomes. tmRNA and SmpB together mimic tRNA shape, replacing the anticodon stem-loop with SmpB. tmRNA is encoded by the ssrA gene; the 2 termini fold to resemble tRNA(Ala) and it encodes a 'tag peptide', a short internal open reading frame. During trans-translation Ala-aminoacylated tmRNA acts like a tRNA, entering the A-site of stalled ribosomes, displacing the stalled mRNA. The ribosome then switches to translate the ORF on the tmRNA; the nascent peptide is terminated with the 'tag peptide' encoded by the tmRNA and targeted for degradation. The ribosome is freed to recommence translation, which seems to be the essential function of trans-translation. The sequence is that of SsrA-binding protein from Macrococcus caseolyticus (strain JCSC5402) (Macrococcoides caseolyticum).